We begin with the raw amino-acid sequence, 83 residues long: Cell division topological specificity factor (83 aa).

It belongs to the MinE family.

Functionally, prevents the cell division inhibition by proteins MinC and MinD at internal division sites while permitting inhibition at polar sites. This ensures cell division at the proper site by restricting the formation of a division septum at the midpoint of the long axis of the cell. The chain is Cell division topological specificity factor from Deinococcus deserti (strain DSM 17065 / CIP 109153 / LMG 22923 / VCD115).